A 252-amino-acid chain; its full sequence is Pyrroloquinoline-quinone synthase (252 aa).

The protein belongs to the PqqC family.

It carries out the reaction 6-(2-amino-2-carboxyethyl)-7,8-dioxo-1,2,3,4,7,8-hexahydroquinoline-2,4-dicarboxylate + 3 O2 = pyrroloquinoline quinone + 2 H2O2 + 2 H2O + H(+). Its pathway is cofactor biosynthesis; pyrroloquinoline quinone biosynthesis. In terms of biological role, ring cyclization and eight-electron oxidation of 3a-(2-amino-2-carboxyethyl)-4,5-dioxo-4,5,6,7,8,9-hexahydroquinoline-7,9-dicarboxylic-acid to PQQ. The protein is Pyrroloquinoline-quinone synthase of Acinetobacter baumannii (strain AB307-0294).